Consider the following 587-residue polypeptide: Beta-(1--&gt;2)glucan export ATP-binding/permease protein NdvA (587 aa).

The ABC transmembrane type-1 domain occupies 21–301 (VSLVVVANIV…MRQFATQIFE (281 aa)). 6 helical membrane passes run 23–43 (LVVV…ILFG), 57–77 (PILF…VLVA), 128–148 (GLWL…ALLI), 158–178 (LSAV…VVMS), 248–268 (MAST…VQAG), and 272–292 (VGDV…LDLM). An ABC transporter domain is found at 335-569 (IEFRDVSFGF…NGRFAALLRA (235 aa)). ATP is bound at residue 368–375 (GPTGAGKT).

The protein belongs to the ABC transporter superfamily. Beta-(1--&gt;2)glucan exporter (TC 3.A.1.108.1) family. As to quaternary structure, homodimer.

It is found in the cell inner membrane. The enzyme catalyses [(1-&gt;2)-beta-D-glucosyl](n)(in) + ATP + H2O = [(1-&gt;2)-beta-D-glucosyl](n)(out) + ADP + phosphate + H(+). Functionally, involved in beta-(1--&gt;2)glucan export. Transmembrane domains (TMD) form a pore in the inner membrane and the ATP-binding domain (NBD) is responsible for energy generation. The chain is Beta-(1--&gt;2)glucan export ATP-binding/permease protein NdvA from Rhizobium johnstonii (strain DSM 114642 / LMG 32736 / 3841) (Rhizobium leguminosarum bv. viciae).